The sequence spans 997 residues: Signal peptide, CUB and EGF-like domain-containing protein 2 (997 aa).

The N-terminal stretch at 1–28 (MGVAGCGRPREARALLLLLLLLPPLLAA) is a signal peptide. The region spanning 43–83 (DVDECAQGLDDCHADALCQNTPTSYKCSCKPGYQGEGRQCE) is the EGF-like 1; calcium-binding domain. Cystine bridges form between C47-C60, C54-C69, C71-C82, C88-C100, C96-C109, C111-C124, C130-C141, and C137-C150. Residues 84-125 (DMDECDNTLNGGCVHDCLNIPGNYRCTCFDGFMLAHDGHNCL) enclose the EGF-like 2; calcium-binding domain. The EGF-like 3; calcium-binding domain maps to 126–162 (DMDECLENNGGCQHICTNVIGSYECRCKEGFFLSDNQ). 3 EGF-like domains span residues 175-211 (CMNK…QKDC), 215-250 (CNHG…GRSC), and 284-319 (CAVN…GKTC). One can recognise an EGF-like 7; calcium-binding domain in the interval 321–361 (DIDECQTRNGGCNHFCKNTVGSFDCSCKKGFKLLTDEKSCQ). Disulfide bonds link C325/C336, C332/C345, C347/C360, C366/C376, C372/C385, C387/C399, C405/C416, C412/C425, and C427/C440. Positions 362–400 (DVDECSLERTCDHSCINHPGTFICACNPGYTLYSFTHCG) constitute an EGF-like 8; calcium-binding domain. The EGF-like 9; calcium-binding domain occupies 401–441 (DTNECSVNNGGCQQVCINTVGSYECQCHPGFKLHWNKKDCV). Residue N657 is glycosylated (N-linked (GlcNAc...) asparagine). The cysteines at positions 807 and 833 are disulfide-linked. The CUB domain occupies 807–919 (CGGELGDFTG…RGFQVPYVTY (113 aa)). An interaction with the cholesterol-anchor of SHH region spans residues 845–854 (ILIVVPEIFL). C860 and C881 are joined by a disulfide.

Interacts with SHH via the cholesterol anchor of the dually lipid-modified SHH (ShhNp). Interacts with PTCH1. Forms homooligomers and heterooligomers with SCUBE1 and SCUBE3. Interacts with VEGFR2. In terms of processing, N-glycosylated. As to expression, expressed in adult heart, lung and testis.

It localises to the secreted. The protein resides in the cell surface. In terms of biological role, lipid-binding protein required for SHH long-range signaling by binding to the dually lipid-modified SHH (ShhNp) and by promoting ShhNp mobilization, solubilization and release from the cell membrane. Acts by enhancing the proteolytic processing (shedding) of the lipid-modified N- and C- terminal of ShhNp at the cell surface. Synergizes with DISP1 to cause an increase in SHH secretion. Probable cell surface coreceptor for VEGFR2 involved in VEGFR2-mediated angiogenesis. The polypeptide is Signal peptide, CUB and EGF-like domain-containing protein 2 (Mus musculus (Mouse)).